A 653-amino-acid polypeptide reads, in one-letter code: Acetyl-coenzyme A synthetase (653 aa).

Residues 196 to 199 (RGGK) and threonine 315 each bind CoA. Residues 391-393 (GEP), 415-420 (DTWWQT), aspartate 506, and arginine 521 each bind ATP. Serine 529 serves as a coordination point for CoA. Arginine 532 is a binding site for ATP. Mg(2+)-binding residues include valine 543 and valine 548. N6-acetyllysine is present on lysine 618.

Belongs to the ATP-dependent AMP-binding enzyme family. Mg(2+) serves as cofactor. Post-translationally, acetylated. Deacetylation by the SIR2-homolog deacetylase activates the enzyme.

The catalysed reaction is acetate + ATP + CoA = acetyl-CoA + AMP + diphosphate. Its function is as follows. Catalyzes the conversion of acetate into acetyl-CoA (AcCoA), an essential intermediate at the junction of anabolic and catabolic pathways. AcsA undergoes a two-step reaction. In the first half reaction, AcsA combines acetate with ATP to form acetyl-adenylate (AcAMP) intermediate. In the second half reaction, it can then transfer the acetyl group from AcAMP to the sulfhydryl group of CoA, forming the product AcCoA. This Laribacter hongkongensis (strain HLHK9) protein is Acetyl-coenzyme A synthetase.